The sequence spans 205 residues: ATP phosphoribosyltransferase (205 aa).

This sequence belongs to the ATP phosphoribosyltransferase family. Short subfamily.

It localises to the cytoplasm. The enzyme catalyses 1-(5-phospho-beta-D-ribosyl)-ATP + diphosphate = 5-phospho-alpha-D-ribose 1-diphosphate + ATP. The protein operates within amino-acid biosynthesis; L-histidine biosynthesis; L-histidine from 5-phospho-alpha-D-ribose 1-diphosphate: step 1/9. Its function is as follows. Catalyzes the condensation of ATP and 5-phosphoribose 1-diphosphate to form N'-(5'-phosphoribosyl)-ATP (PR-ATP). Has a crucial role in the pathway because the rate of histidine biosynthesis seems to be controlled primarily by regulation of HisG enzymatic activity. The chain is ATP phosphoribosyltransferase from Thermococcus gammatolerans (strain DSM 15229 / JCM 11827 / EJ3).